We begin with the raw amino-acid sequence, 711 residues long: Polyribonucleotide nucleotidyltransferase (711 aa).

Mg(2+) contacts are provided by Asp-486 and Asp-492. The 60-residue stretch at 553–612 folds into the KH domain; sequence PRIHTIKINPDKIKDVIGKGGSVIRALTEETGTTIEIEDDGTVKIAATDGEKAKHAIRRI. One can recognise an S1 motif domain in the interval 622 to 690; sequence GRVYTGKVTR…RQGRIRLSIK (69 aa). Positions 689–711 are disordered; sequence IKEATEQSQPAAAPEAPAAEQGE. Positions 694–711 are enriched in low complexity; the sequence is EQSQPAAAPEAPAAEQGE.

This sequence belongs to the polyribonucleotide nucleotidyltransferase family. In terms of assembly, component of the RNA degradosome, which is a multiprotein complex involved in RNA processing and mRNA degradation. Mg(2+) is required as a cofactor.

It is found in the cytoplasm. The catalysed reaction is RNA(n+1) + phosphate = RNA(n) + a ribonucleoside 5'-diphosphate. Involved in mRNA degradation. Catalyzes the phosphorolysis of single-stranded polyribonucleotides processively in the 3'- to 5'-direction. The protein is Polyribonucleotide nucleotidyltransferase of Shigella boydii serotype 4 (strain Sb227).